The following is a 468-amino-acid chain: Probable Xaa-Pro aminopeptidase PEPP (468 aa).

Residues D264, D275, E398, and E438 each contribute to the Mn(2+) site.

The protein belongs to the peptidase M24B family. Requires Mn(2+) as cofactor.

The enzyme catalyses Release of any N-terminal amino acid, including proline, that is linked to proline, even from a dipeptide or tripeptide.. Catalyzes the removal of a penultimate prolyl residue from the N-termini of peptides. The chain is Probable Xaa-Pro aminopeptidase PEPP (PEPP) from Paracoccidioides brasiliensis (strain Pb03).